The chain runs to 145 residues: MRHRKQGRKFGRTSSHRKAMFKNMSASLINHELIKTTLPKAKELRAIVEPLVTLAKREHKLRQELDTNSNEFKAQSVALRRQAFDFLRNKAAVTKLFEEFGARYAERAGGYTRILKCGYRFGDKAPMAFIELVDRPQVEEAADEE.

This sequence belongs to the bacterial ribosomal protein bL17 family. As to quaternary structure, part of the 50S ribosomal subunit. Contacts protein L32.

The sequence is that of Large ribosomal subunit protein bL17 from Francisella tularensis subsp. tularensis (strain FSC 198).